The chain runs to 146 residues: Hemoglobin subunit beta (146 aa).

In terms of domain architecture, Globin spans 2–146 (HWTAEEKQLI…VAHALARKYH (145 aa)). His-63 and His-92 together coordinate heme b.

It belongs to the globin family. As to quaternary structure, heterotetramer of two alpha chains and two beta chains. Red blood cells.

Involved in oxygen transport from the lung to the various peripheral tissues. The chain is Hemoglobin subunit beta (HBB) from Anas platyrhynchos platyrhynchos (Northern mallard).